The sequence spans 358 residues: tRNA N6-adenosine threonylcarbamoyltransferase (358 aa).

The Fe cation site is built by histidine 111 and histidine 115. Residues 146–150 (LVSGG), aspartate 179, glycine 192, and asparagine 294 each bind substrate. Position 322 (aspartate 322) interacts with Fe cation.

Belongs to the KAE1 / TsaD family. It depends on Fe(2+) as a cofactor.

Its subcellular location is the cytoplasm. It catalyses the reaction L-threonylcarbamoyladenylate + adenosine(37) in tRNA = N(6)-L-threonylcarbamoyladenosine(37) in tRNA + AMP + H(+). Functionally, required for the formation of a threonylcarbamoyl group on adenosine at position 37 (t(6)A37) in tRNAs that read codons beginning with adenine. Is involved in the transfer of the threonylcarbamoyl moiety of threonylcarbamoyl-AMP (TC-AMP) to the N6 group of A37, together with TsaE and TsaB. TsaD likely plays a direct catalytic role in this reaction. The polypeptide is tRNA N6-adenosine threonylcarbamoyltransferase (Helicobacter hepaticus (strain ATCC 51449 / 3B1)).